The primary structure comprises 229 residues: UPF0173 metal-dependent hydrolase SSP1060 (229 aa).

Belongs to the UPF0173 family.

The chain is UPF0173 metal-dependent hydrolase SSP1060 from Staphylococcus saprophyticus subsp. saprophyticus (strain ATCC 15305 / DSM 20229 / NCIMB 8711 / NCTC 7292 / S-41).